Here is a 206-residue protein sequence, read N- to C-terminus: Protein-methionine-sulfoxide reductase heme-binding subunit MsrQ (206 aa).

6 helical membrane passes run isoleucine 14–alanine 34, phenylalanine 45–threonine 65, methionine 82–aspartate 102, proline 118–threonine 138, tryptophan 149–tryptophan 169, and glutamine 179–tryptophan 199.

This sequence belongs to the MsrQ family. As to quaternary structure, heterodimer of a catalytic subunit (MsrP) and a heme-binding subunit (MsrQ). Requires FMN as cofactor. It depends on heme b as a cofactor.

It is found in the cell inner membrane. Functionally, part of the MsrPQ system that repairs oxidized periplasmic proteins containing methionine sulfoxide residues (Met-O), using respiratory chain electrons. Thus protects these proteins from oxidative-stress damage caused by reactive species of oxygen and chlorine generated by the host defense mechanisms. MsrPQ is essential for the maintenance of envelope integrity under bleach stress, rescuing a wide series of structurally unrelated periplasmic proteins from methionine oxidation. MsrQ provides electrons for reduction to the reductase catalytic subunit MsrP, using the quinone pool of the respiratory chain. The sequence is that of Protein-methionine-sulfoxide reductase heme-binding subunit MsrQ from Bordetella pertussis (strain Tohama I / ATCC BAA-589 / NCTC 13251).